A 749-amino-acid chain; its full sequence is Meiotically up-regulated gene 122 protein (749 aa).

The Cytoplasmic segment spans residues 1–20 (MYRKWDLCITRHLLPYIEHS). Residues 21-41 (VIPIIALLVLSLIFYILYICF) traverse the membrane as a helical; Signal-anchor for type II membrane protein segment. Residues 42 to 749 (GTTSYILSGI…LLSNALRSII (708 aa)) lie on the Lumenal side of the membrane. A PXA domain is found at 88–261 (PPELEAPLQL…CIILYFSSSE (174 aa)). The 112-residue stretch at 311-422 (LHYQFLKEAS…KFFAKSMRSH (112 aa)) folds into the PX domain. 2 disordered regions span residues 439–489 (QSSS…LSQQ) and 504–546 (GSCT…PPKP). Composition is skewed to polar residues over residues 440-461 (SSSV…NKTS) and 475-489 (LSHQ…LSQQ).

The protein belongs to the sorting nexin family.

Its subcellular location is the endoplasmic reticulum membrane. Has a role in meiosis. The sequence is that of Meiotically up-regulated gene 122 protein (mug122) from Schizosaccharomyces pombe (strain 972 / ATCC 24843) (Fission yeast).